A 64-amino-acid polypeptide reads, in one-letter code: Large ribosomal subunit protein bL28 (64 aa).

This sequence belongs to the bacterial ribosomal protein bL28 family.

The sequence is that of Large ribosomal subunit protein bL28 from Elusimicrobium minutum (strain Pei191).